The following is a 360-amino-acid chain: Phenylalanine--tRNA ligase alpha subunit (360 aa).

Glu-260 serves as a coordination point for Mg(2+).

This sequence belongs to the class-II aminoacyl-tRNA synthetase family. Phe-tRNA synthetase alpha subunit type 1 subfamily. As to quaternary structure, tetramer of two alpha and two beta subunits. Requires Mg(2+) as cofactor.

It is found in the cytoplasm. The enzyme catalyses tRNA(Phe) + L-phenylalanine + ATP = L-phenylalanyl-tRNA(Phe) + AMP + diphosphate + H(+). This is Phenylalanine--tRNA ligase alpha subunit from Rhizobium etli (strain ATCC 51251 / DSM 11541 / JCM 21823 / NBRC 15573 / CFN 42).